The following is a 196-amino-acid chain: Pyridoxal 5'-phosphate synthase subunit PdxT (196 aa).

47–49 (GES) is an L-glutamine binding site. Cys79 acts as the Nucleophile in catalysis. L-glutamine is bound by residues Arg106 and 134–135 (IR). Active-site charge relay system residues include His170 and Glu172.

The protein belongs to the glutaminase PdxT/SNO family. In terms of assembly, in the presence of PdxS, forms a dodecamer of heterodimers. Only shows activity in the heterodimer.

It catalyses the reaction aldehydo-D-ribose 5-phosphate + D-glyceraldehyde 3-phosphate + L-glutamine = pyridoxal 5'-phosphate + L-glutamate + phosphate + 3 H2O + H(+). The enzyme catalyses L-glutamine + H2O = L-glutamate + NH4(+). It participates in cofactor biosynthesis; pyridoxal 5'-phosphate biosynthesis. Functionally, catalyzes the hydrolysis of glutamine to glutamate and ammonia as part of the biosynthesis of pyridoxal 5'-phosphate. The resulting ammonia molecule is channeled to the active site of PdxS. This chain is Pyridoxal 5'-phosphate synthase subunit PdxT, found in Bacillus cereus (strain ZK / E33L).